An 81-amino-acid polypeptide reads, in one-letter code: Short neurotoxin D (81 aa).

Residues methionine 1–threonine 21 form the signal peptide. Disulfide bonds link cysteine 24–cysteine 43, cysteine 38–cysteine 60, cysteine 62–cysteine 73, and cysteine 74–cysteine 79.

The protein belongs to the three-finger toxin family. Short-chain subfamily. Type I alpha-neurotoxin sub-subfamily. Expressed by the venom gland.

It localises to the secreted. In terms of biological role, binds to muscle nicotinic acetylcholine receptor (nAChR) and inhibit acetylcholine from binding to the receptor, thereby impairing neuromuscular transmission. This Aipysurus laevis (Olive sea snake) protein is Short neurotoxin D.